Here is a 260-residue protein sequence, read N- to C-terminus: Snake venom serine protease homolog (260 aa).

Positions 1-18 are cleaved as a signal peptide; that stretch reads MVLVRVLANLLMLQLSYA. Positions 19–24 are excised as a propeptide; that stretch reads QKSSEL. Residues 25–251 form the Peptidase S1 domain; that stretch reads IIGGDECNIN…HLNWIQSIIA (227 aa). 6 disulfide bridges follow: cysteine 31-cysteine 165, cysteine 52-cysteine 68, cysteine 100-cysteine 258, cysteine 144-cysteine 212, cysteine 176-cysteine 191, and cysteine 202-cysteine 227. 2 N-linked (GlcNAc...) asparagine glycosylation sites follow: asparagine 123 and asparagine 124. Residue asparagine 253 is glycosylated (N-linked (GlcNAc...) asparagine).

It belongs to the peptidase S1 family. Snake venom subfamily. As to expression, expressed by the venom gland.

It localises to the secreted. In terms of biological role, snake venom serine protease homolog that may act in the hemostasis system of the prey. This chain is Snake venom serine protease homolog, found in Protobothrops jerdonii (Jerdon's pitviper).